The chain runs to 628 residues: Serine/threonine-protein phosphatase 2A regulatory subunit psrA (628 aa).

The span at 1-22 (MKNDHINYQQNLSQSPILNSNK) shows a compositional bias: polar residues. Disordered regions lie at residues 1–61 (MKND…QIPF), 500–558 (KKKQ…DKPS), and 577–628 (SSHR…YTFT). Composition is skewed to low complexity over residues 23–58 (NQTQQNQQQQQQQQQQNPQQQQQFQHQQVPQLSPQQ) and 524–547 (QINQNNNNNNNNINNNNNNNNNNN). Basic and acidic residues predominate over residues 600–618 (NNHTNHDSEIENEVKEDFR).

The protein belongs to the phosphatase 2A regulatory subunit B56 family. PP2A consists of a trimeric holoenzyme, composed of a 37 kDa catalytic subunit (C subunit) and a 65 kDa constant regulatory subunit (A subunit), that associates with a variety of regulatory subunits (B subunit) such as phr2AB (B55) and psrA (B56 homolog). The trimer may partially dissociates into a core 'AC' dimer equally active compared to the trimer. Seems to play a role in proper anterior patterning (pstO and pstAB).

It is found in the cytoplasm. Its subcellular location is the cytosol. In terms of biological role, involved in developmental cell fate decision. The polypeptide is Serine/threonine-protein phosphatase 2A regulatory subunit psrA (psrA) (Dictyostelium discoideum (Social amoeba)).